We begin with the raw amino-acid sequence, 378 residues long: Protein RecA (378 aa).

Gly-66–Thr-73 contacts ATP. A disordered region spans residues Pro-333–Ser-378. A compositionally biased stretch (low complexity) spans Ala-338 to Ser-378.

It belongs to the RecA family.

Its subcellular location is the cytoplasm. Can catalyze the hydrolysis of ATP in the presence of single-stranded DNA, the ATP-dependent uptake of single-stranded DNA by duplex DNA, and the ATP-dependent hybridization of homologous single-stranded DNAs. It interacts with LexA causing its activation and leading to its autocatalytic cleavage. The protein is Protein RecA of Streptomyces venezuelae (strain ATCC 10712 / CBS 650.69 / DSM 40230 / JCM 4526 / NBRC 13096 / PD 04745).